Reading from the N-terminus, the 757-residue chain is Polyribonucleotide nucleotidyltransferase (757 aa).

Positions 531 and 537 each coordinate Mg(2+). A KH domain is found at 597–656 (PRVTTIRVPVDKIGEVIGPKGKIINAITEETGAQISIEDDGTVFVGATDGPSAQAAIDRI). The S1 motif domain maps to 668 to 737 (GERFLGTVVK…KRGKISLVLV (70 aa)).

Belongs to the polyribonucleotide nucleotidyltransferase family. Mg(2+) serves as cofactor.

Its subcellular location is the cytoplasm. The enzyme catalyses RNA(n+1) + phosphate = RNA(n) + a ribonucleoside 5'-diphosphate. Functionally, involved in mRNA degradation. Catalyzes the phosphorolysis of single-stranded polyribonucleotides processively in the 3'- to 5'-direction. This chain is Polyribonucleotide nucleotidyltransferase, found in Mycolicibacterium paratuberculosis (strain ATCC BAA-968 / K-10) (Mycobacterium paratuberculosis).